A 273-amino-acid chain; its full sequence is Imidazole glycerol phosphate synthase subunit HisF (273 aa).

Residues D11 and D134 contribute to the active site.

This sequence belongs to the HisA/HisF family. As to quaternary structure, heterodimer of HisH and HisF.

The protein resides in the cytoplasm. It catalyses the reaction 5-[(5-phospho-1-deoxy-D-ribulos-1-ylimino)methylamino]-1-(5-phospho-beta-D-ribosyl)imidazole-4-carboxamide + L-glutamine = D-erythro-1-(imidazol-4-yl)glycerol 3-phosphate + 5-amino-1-(5-phospho-beta-D-ribosyl)imidazole-4-carboxamide + L-glutamate + H(+). It participates in amino-acid biosynthesis; L-histidine biosynthesis; L-histidine from 5-phospho-alpha-D-ribose 1-diphosphate: step 5/9. Its function is as follows. IGPS catalyzes the conversion of PRFAR and glutamine to IGP, AICAR and glutamate. The HisF subunit catalyzes the cyclization activity that produces IGP and AICAR from PRFAR using the ammonia provided by the HisH subunit. The protein is Imidazole glycerol phosphate synthase subunit HisF of Methanosarcina acetivorans (strain ATCC 35395 / DSM 2834 / JCM 12185 / C2A).